The chain runs to 90 residues: Small ribosomal subunit protein bS20 (90 aa).

Belongs to the bacterial ribosomal protein bS20 family.

In terms of biological role, binds directly to 16S ribosomal RNA. This is Small ribosomal subunit protein bS20 from Francisella tularensis subsp. holarctica (strain FTNF002-00 / FTA).